Consider the following 289-residue polypeptide: Melatonin receptor type 1B (289 aa).

Residues 1–2 (GN) lie on the Cytoplasmic side of the membrane. A helical transmembrane segment spans residues 3–23 (AFVVSLALADLVVALYPYPLV). Over 24 to 41 (LLAIFHNGWTLGEMHCKV) the chain is Extracellular. Cysteine 39 and cysteine 116 form a disulfide bridge. The helical transmembrane segment at 42–62 (SGFVMGLSVIGSIFNITAIAI) threads the bilayer. Over 63–81 (NRYCYICHSFAYDKVYSCW) the chain is Cytoplasmic. A helical membrane pass occupies residues 82–102 (NTMLYVSLIWVLTVIATVPNF). Over 103–126 (FVGSLKYDPRIYSCTFVQTASSYY) the chain is Extracellular. The chain crosses the membrane as a helical span at residues 127-147 (TIAVVVIHFIVPITVVSFCYL). Residues 148-179 (RIWVLVLQVRRRVKSETKPRLKPSDFRNFLTM) are Cytoplasmic-facing. Residues 180–200 (FVVFVIFAFCWAPLNFIGLAV) traverse the membrane as a helical segment. Residues 201-213 (AINPSEMAPKVPE) lie on the Extracellular side of the membrane. Residues 214-234 (WLFIISYFMAYFNSCLNAIIY) traverse the membrane as a helical segment. The Cytoplasmic portion of the chain corresponds to 235–289 (GLLNQNFRNEYKRILMSLWMPRLFFQDTSKGGTDGQKSKPSPALNNNDQMKTDTL). Residues 264–289 (KGGTDGQKSKPSPALNNNDQMKTDTL) form a disordered region.

Belongs to the G-protein coupled receptor 1 family. Brain and kidney, with trace levels in lungs.

The protein resides in the cell membrane. Functionally, high affinity receptor for melatonin. The activity of this receptor is mediated by pertussis toxin sensitive G proteins that inhibits adenylate cyclase activity. This Gallus gallus (Chicken) protein is Melatonin receptor type 1B.